A 299-amino-acid polypeptide reads, in one-letter code: Acarbose 7(IV)-phosphotransferase (299 aa).

This sequence belongs to the carbohydrate kinase PfkB family.

It carries out the reaction acarbose + ATP = acarbose 7(IV)-phosphate + ADP + H(+). In terms of biological role, catalyzes the phosphorylation of the alpha-glucosidase inhibitor acarbose. Phosphorylation of acarbose could be a resistance-like self-protection mechanism. The chain is Acarbose 7(IV)-phosphotransferase from Actinoplanes sp. (strain ATCC 31044 / CBS 674.73 / SE50/110).